The following is a 45-amino-acid chain: Cytochrome b559 subunit beta (45 aa).

The helical transmembrane segment at 20 to 36 (WLALHTLGVPTVFFLGA) threads the bilayer. His-24 contacts heme.

This sequence belongs to the PsbE/PsbF family. Heterodimer of an alpha subunit and a beta subunit. PSII is composed of 1 copy each of membrane proteins PsbA, PsbB, PsbC, PsbD, PsbE, PsbF, PsbH, PsbI, PsbJ, PsbK, PsbL, PsbM, PsbT, PsbX, PsbY, PsbZ, Psb30/Ycf12, peripheral proteins PsbO, CyanoQ (PsbQ), PsbU, PsbV and a large number of cofactors. It forms dimeric complexes. It depends on heme b as a cofactor.

The protein resides in the cellular thylakoid membrane. Its function is as follows. This b-type cytochrome is tightly associated with the reaction center of photosystem II (PSII). PSII is a light-driven water:plastoquinone oxidoreductase that uses light energy to abstract electrons from H(2)O, generating O(2) and a proton gradient subsequently used for ATP formation. It consists of a core antenna complex that captures photons, and an electron transfer chain that converts photonic excitation into a charge separation. The sequence is that of Cytochrome b559 subunit beta from Parasynechococcus marenigrum (strain WH8102).